The chain runs to 342 residues: uncharacterized protein (342 aa).

Substrate is bound at residue R69. H176 (proton donor) is an active-site residue. D240 lines the substrate pocket.

Belongs to the aldose epimerase family.

This is an uncharacterized protein from Saccharomyces cerevisiae (strain ATCC 204508 / S288c) (Baker's yeast).